The chain runs to 932 residues: AP-3 complex subunit delta (932 aa).

Thr2 carries the post-translational modification N-acetylthreonine. 12 HEAT repeats span residues 157-194, 196-231, 233-269, 270-307, 310-346, 347-384, 386-425, 427-466, 490-527, 528-564, 570-601, and 602-638; these read SLAR…QYPE, LRDN…KNPQ, FIQL…VEPK, LRAK…LEED, ETAM…KINT, DFIS…EDNL, AIVQ…ENYK, KMVN…DISD, VTIA…TLVE, NGND…NWCN, KRFE…ERSV, and EVLE…AYEL. Residues Ser700 and Ser727 each carry the phosphoserine modification. The tract at residues 720–868 is disordered; that stretch reads EREKERMSNP…EEGNLRKEDE (149 aa). Composition is skewed to basic and acidic residues over residues 738-747 and 755-766; these read ERTKNSKDLL and SDKKPETIRLNR. Thr767 carries the post-translational modification Phosphothreonine. A compositionally biased stretch (low complexity) spans 767-779; the sequence is TDNSLNSLSLSTT. Ser770 and Ser773 each carry phosphoserine. The span at 783-793 shows a compositional bias: basic residues; it reads RKKKKGKKKNR. Residue Ser798 is modified to Phosphoserine. The span at 806 to 832 shows a compositional bias: basic and acidic residues; it reads APKRKDAFQKPHDNHSTQNPLKKDKIN. The span at 838-855 shows a compositional bias: polar residues; the sequence is QLENFDFSNFGQSSNAGR. A compositionally biased stretch (basic and acidic residues) spans 857–868; the sequence is SQEEGNLRKEDE. The stretch at 858 to 878 forms a coiled coil; sequence QEEGNLRKEDELELSRLEANL. A Phosphoserine modification is found at Ser888. Over residues 897-915 the composition is skewed to basic residues; it reads KKKKKGKKSKSKNKLKTKA. Residues 897-932 form a disordered region; that stretch reads KKKKKGKKSKSKNKLKTKAKNSPEPNEFLRDQSTDI. Ser918 is subject to Phosphoserine. The segment covering 923 to 932 has biased composition (basic and acidic residues); sequence EFLRDQSTDI.

Belongs to the adaptor complexes large subunit family. Adaptor protein complex 3 (AP-3) is a heterotetramer composed of 2 large adaptins (APL5 and APL6), a medium adaptin (APM3) and a small adaptin (APS3). Interacts with VPS41.

Its subcellular location is the golgi apparatus. It localises to the cytoplasmic vesicle. The protein resides in the clathrin-coated vesicle membrane. Part of the AP-3 complex, an adaptor-related complex which is not clathrin-associated. The complex is associated with the Golgi region as well as more peripheral structures. It facilitates the budding of vesicles from the Golgi membrane and may be directly involved in trafficking to the vacuole. Required for the transport via the ALP pathway, which directs the transport of the cargo proteins PHO8 and VAM3 to the vacuole. This Saccharomyces cerevisiae (strain ATCC 204508 / S288c) (Baker's yeast) protein is AP-3 complex subunit delta (APL5).